The primary structure comprises 383 residues: Probable transcriptional repressor C1348.12 (383 aa).

The zn(2)-C6 fungal-type DNA-binding region spans 34-60 (CVICRSKKQKCDGQLPCLYCKKYEYQC).

It localises to the nucleus. Probable transcriptional repressor of multidrug resistance genes. This is Probable transcriptional repressor C1348.12 from Schizosaccharomyces pombe (strain 972 / ATCC 24843) (Fission yeast).